Consider the following 87-residue polypeptide: uncharacterized protein (87 aa).

A helical transmembrane segment spans residues 25-47; sequence FFWEVCNMILFIIIALCGYLLFS.

It is found in the membrane. This is an uncharacterized protein from Bacillus subtilis (strain 168).